A 738-amino-acid chain; its full sequence is Squalene hopane cyclase afumA (738 aa).

2 PFTB repeats span residues 132–173 (GSQY…RIIG) and 321–361 (RRRC…KLHD). The active-site Proton donor is Asp460. PFTB repeat units lie at residues 482–523 (VRDA…ESLC), 581–621 (CARA…QYFK), and 634–675 (AARA…SQTA).

This sequence belongs to the terpene cyclase/mutase family.

Its pathway is secondary metabolite biosynthesis. Functionally, squalene hopane cyclase; part of the gene cluster that mediates the biosynthesis fumihopaside A, a hopane-type glucoside that enhances the thermotolerance and UV resistance of N.fumigata. The first step of fumihopaside A biosynthesis is performed by the squalene hopane cyclase afumA that catalyzes the cyclization of 3S-oxidosqualene into the hopene 21-beta-H-hopane-3-beta,22-diol. The cytochrome P450 monooxygenase afumB is responsible for both hydroxylation at C-24 and oxidations at C-30 of the afumA product. The glycosyltransferase afumC then catalyzes the glycosylation at C-24, using UDP-D-glucose as a donor, to produce fumihopaside A. AfumC is also able to accept UDP-D-galactose and UDP-D-glucuronic acid as donors to yield minor derivatives. Fumihopaside B, another minor derivative produced, is different from fumihopaside A due to the presence of a double bond between C-22 and C-29. The sequence is that of Squalene hopane cyclase afumA from Aspergillus fumigatus (strain CBS 144.89 / FGSC A1163 / CEA10) (Neosartorya fumigata).